The sequence spans 144 residues: Gas vesicle protein A1 (144 aa).

Positions 72–144 (EAGPRKDPGL…APSRRKEEQE (73 aa)) are disordered. Residues 113 to 127 (KQARDDGGSERETSS) are compositionally biased toward basic and acidic residues.

It belongs to the gas vesicle GvpA family. As to quaternary structure, the gas vesicle shell is 2 nm thick and consists of a single layer of this protein. It forms helical ribs nearly perpendicular to the long axis of the vesicle.

The protein localises to the gas vesicle shell. Functionally, gas vesicles are hollow, gas filled proteinaceous nanostructures found in some microorganisms. During planktonic growth they allow positioning of the organism at a favorable depth for light or nutrient acquisition. GvpA forms the protein shell. It is not clear what function GVs perform in soil bacteria. This is Gas vesicle protein A1 from Streptomyces coelicolor (strain ATCC BAA-471 / A3(2) / M145).